Here is a 387-residue protein sequence, read N- to C-terminus: Radial spoke protein 14 (387 aa).

ARM repeat units lie at residues 24–67, 69–109, 111–150, 154–198, 204–244, 245–286, 289–328, and 330–370; these read KALP…ELLS, PVNH…LLAA, EVGA…EAAR, TRRA…TCTQ, GILS…ALAT, REDA…AITI, EGKY…NVAE, and PEAR…QCRF.

It belongs to the flagellar radial spoke RSP14 family.

It is found in the cytoplasm. The protein resides in the cytoskeleton. The protein localises to the flagellum axoneme. The sequence is that of Radial spoke protein 14 (RSP14) from Chlamydomonas reinhardtii (Chlamydomonas smithii).